The chain runs to 216 residues: Lipoprotein signal peptidase (216 aa).

The disordered stretch occupies residues 1-21 (MATSRTAPTRAPSLRSSPALE). A run of 3 helical transmembrane segments spans residues 31-51 (VGALVILAVVALCVYLMDQIT), 89-109 (GSTWIFSLVGVGVLGFVIWYA), and 114-134 (STAWAILFGLLLGGLLGNLTD). Catalysis depends on residues aspartate 149 and aspartate 164. A helical transmembrane segment spans residues 159–179 (IFNLADVAIVFSMGLFLLLTL). Residues 189-216 (QRDEGAGVSSASPAGDESAADKPENLSA) are disordered. The segment covering 207-216 (AADKPENLSA) has biased composition (basic and acidic residues).

Belongs to the peptidase A8 family.

Its subcellular location is the cell membrane. The catalysed reaction is Release of signal peptides from bacterial membrane prolipoproteins. Hydrolyzes -Xaa-Yaa-Zaa-|-(S,diacylglyceryl)Cys-, in which Xaa is hydrophobic (preferably Leu), and Yaa (Ala or Ser) and Zaa (Gly or Ala) have small, neutral side chains.. It functions in the pathway protein modification; lipoprotein biosynthesis (signal peptide cleavage). In terms of biological role, this protein specifically catalyzes the removal of signal peptides from prolipoproteins. The protein is Lipoprotein signal peptidase of Leifsonia xyli subsp. xyli (strain CTCB07).